A 233-amino-acid chain; its full sequence is Beta-fibrinogenase brevinase (233 aa).

One can recognise a Peptidase S1 domain in the interval 1–224 (VIGGDECNIN…YIDWIQSIIA (224 aa)). 6 disulfide bridges follow: Cys-7-Cys-138, Cys-25-Cys-41, Cys-73-Cys-231, Cys-117-Cys-185, Cys-149-Cys-164, and Cys-175-Cys-200. The Charge relay system role is filled by His-40. Asn-54 carries an N-linked (GlcNAc...) asparagine glycan. Catalysis depends on Asp-85, which acts as the Charge relay system. Asn-129 is a glycosylation site (N-linked (GlcNAc...) asparagine). Residues 176–178 (RGD) carry the Cell attachment site motif. The active-site Charge relay system is the Ser-179. Asn-226 carries N-linked (GlcNAc...) asparagine glycosylation.

Belongs to the peptidase S1 family. Snake venom subfamily. Heterodimer of the brevinase A chain and the brevinase B chain. Expressed by the venom gland.

Its subcellular location is the secreted. With respect to regulation, the fibrinolytic activity is completely inhibited by PMSF, diisopropylfluorophosphate (DFP), pefabloc, dithiothreitol (DTT) and Zn(2+), but not by Pepstatin A, E64, iodoacetate, chymostatin, tosyl-Lphenylalanine chloromethyl ketone (TPCK), soybean trypsin inhibitor (SBTI), phosphoramidon, Ca(2+), Co(2+), Cu(2+), Fe(2+), Mg(2+), Mn(2+), K(+), and Na(+). Its function is as follows. Snake venom serine protease that has fibrinogenolytic activities. Preferentially cleaves the Bbeta-chain (FGB) and more slowly the Aa-chain (FGA) of fibrinogen, but does not affect the gamma-chain. Also has fibrinolytic activity. May play a role in antithrombotic reaction as well as thrombolytic reaction. The sequence is that of Beta-fibrinogenase brevinase from Gloydius blomhoffii (Mamushi).